Here is a 510-residue protein sequence, read N- to C-terminus: ATP synthase subunit alpha (510 aa).

G169–T176 serves as a coordination point for ATP.

This sequence belongs to the ATPase alpha/beta chains family. In terms of assembly, F-type ATPases have 2 components, CF(1) - the catalytic core - and CF(0) - the membrane proton channel. CF(1) has five subunits: alpha(3), beta(3), gamma(1), delta(1), epsilon(1). CF(0) has three main subunits: a(1), b(2) and c(9-12). The alpha and beta chains form an alternating ring which encloses part of the gamma chain. CF(1) is attached to CF(0) by a central stalk formed by the gamma and epsilon chains, while a peripheral stalk is formed by the delta and b chains.

It is found in the cell inner membrane. It catalyses the reaction ATP + H2O + 4 H(+)(in) = ADP + phosphate + 5 H(+)(out). Functionally, produces ATP from ADP in the presence of a proton gradient across the membrane. The alpha chain is a regulatory subunit. The sequence is that of ATP synthase subunit alpha from Rickettsia rickettsii (strain Iowa).